Consider the following 262-residue polypeptide: Enoyl-[acyl-carrier-protein] reductase [NADH] FabI (262 aa).

NAD(+) is bound by residues Gly-13, 19-20, Gln-40, 64-65, and Ile-92; these read SI and DV. Position 95 (Ala-95) interacts with substrate. Residues Tyr-146 and Tyr-156 each act as proton acceptor in the active site. NAD(+) contacts are provided by residues Lys-163 and 192–196; that span reads IRTLA.

This sequence belongs to the short-chain dehydrogenases/reductases (SDR) family. FabI subfamily. Homotetramer.

The catalysed reaction is a 2,3-saturated acyl-[ACP] + NAD(+) = a (2E)-enoyl-[ACP] + NADH + H(+). It carries out the reaction (2E)-butenoyl-[ACP] + NADH + H(+) = butanoyl-[ACP] + NAD(+). The enzyme catalyses (2E)-decenoyl-[ACP] + NADH + H(+) = decanoyl-[ACP] + NAD(+). It catalyses the reaction (2E)-hexadecenoyl-[ACP] + NADH + H(+) = hexadecanoyl-[ACP] + NAD(+). The catalysed reaction is (2E,9Z)-hexadecadienoyl-[ACP] + NADH + H(+) = (9Z)-hexadecenoyl-[ACP] + NAD(+). It carries out the reaction (2E)-5-methylhexenoyl-[ACP] + NADH + H(+) = 5-methylhexanoyl-[ACP] + NAD(+). Its pathway is lipid metabolism; fatty acid biosynthesis. The protein operates within cofactor biosynthesis; biotin biosynthesis. Inhibited by diazaborines, triclosan (5-chloro-2-2,4-dichlorophenoxyphenol), 1,4-disubstituted imidazoles, 1,4-benzodiazepine derivatives, naphthyridinone derivatives, luteolin and curcumin. The antibiotic diazaborine interferes with the activity by binding to the protein and NAD. Functionally, catalyzes the reduction of a carbon-carbon double bond in an enoyl moiety that is covalently linked to an acyl carrier protein (ACP). Involved in the elongation cycle of fatty acid which are used in the lipid metabolism and in the biotin biosynthesis. This chain is Enoyl-[acyl-carrier-protein] reductase [NADH] FabI (fabI), found in Escherichia coli (strain K12).